A 471-amino-acid chain; its full sequence is Cytochrome P450 monooxygenase afvE (471 aa).

Residues 265-285 (IIFYHFELSTPVAFFIIFAVY) form a helical membrane-spanning segment. Cysteine 410 contributes to the heme binding site.

This sequence belongs to the cytochrome P450 family. Heme serves as cofactor.

Its subcellular location is the membrane. It functions in the pathway secondary metabolite biosynthesis. Its function is as follows. Cytochrome P450 monooxygenase; part of the gene cluster that mediates the biosynthesis of aflavarin, a bicoumarin that exhibits anti-insectan activity against the fungivorous beetle C.hemipterus. The chain is Cytochrome P450 monooxygenase afvE from Aspergillus flavus (strain ATCC 200026 / FGSC A1120 / IAM 13836 / NRRL 3357 / JCM 12722 / SRRC 167).